The sequence spans 293 residues: Elongation factor Ts (293 aa).

Residues 79–82 form an involved in Mg(2+) ion dislocation from EF-Tu region; that stretch reads TDFV.

It belongs to the EF-Ts family.

The protein resides in the cytoplasm. Functionally, associates with the EF-Tu.GDP complex and induces the exchange of GDP to GTP. It remains bound to the aminoacyl-tRNA.EF-Tu.GTP complex up to the GTP hydrolysis stage on the ribosome. The polypeptide is Elongation factor Ts (Bacillus pumilus (strain SAFR-032)).